Reading from the N-terminus, the 245-residue chain is Carbohydrate deacetylase 1 (245 aa).

2 residues coordinate Mg(2+): H59 and H125.

Belongs to the YdjC deacetylase family. As to quaternary structure, homodimer. Requires Mg(2+) as cofactor.

Probably catalyzes the deacetylation of acetylated carbohydrates an important step in the degradation of oligosaccharides. The chain is Carbohydrate deacetylase 1 from Listeria innocua serovar 6a (strain ATCC BAA-680 / CLIP 11262).